The following is a 133-amino-acid chain: Snaclec botrocetin subunit alpha (133 aa).

3 disulfides stabilise this stretch: cysteine 2–cysteine 13, cysteine 30–cysteine 128, and cysteine 103–cysteine 120. A C-type lectin domain is found at 9–129; sequence YEGNCYKFFQ…CAQKNPFVCK (121 aa).

This sequence belongs to the snaclec family. In terms of assembly, heterodimer of subunits alpha and beta; disulfide-linked. Botrocetin and vWF form a soluble complex. As to expression, expressed by the venom gland.

Its subcellular location is the secreted. Functionally, snaclec that binds to von Willebrand factor (VWF) and induces its interaction with GPIbalpha (GP1BA) (via the vWF A1 domain), resulting in platelet aggregation. This Bothrops jararaca (Jararaca) protein is Snaclec botrocetin subunit alpha.